The primary structure comprises 578 residues: Arginine--tRNA ligase (578 aa).

Positions 127–137 (PNLAKEMHVGH) match the 'HIGH' region motif.

The protein belongs to the class-I aminoacyl-tRNA synthetase family. Monomer.

Its subcellular location is the cytoplasm. It carries out the reaction tRNA(Arg) + L-arginine + ATP = L-arginyl-tRNA(Arg) + AMP + diphosphate. The polypeptide is Arginine--tRNA ligase (Pseudomonas syringae pv. tomato (strain ATCC BAA-871 / DC3000)).